Here is a 377-residue protein sequence, read N- to C-terminus: Succinyl-diaminopimelate desuccinylase (377 aa).

Histidine 67 contributes to the Zn(2+) binding site. The active site involves aspartate 69. Aspartate 100 is a binding site for Zn(2+). Glutamate 134 functions as the Proton acceptor in the catalytic mechanism. Residues glutamate 135, glutamate 163, and histidine 349 each contribute to the Zn(2+) site.

This sequence belongs to the peptidase M20A family. DapE subfamily. As to quaternary structure, homodimer. Zn(2+) serves as cofactor. The cofactor is Co(2+).

It carries out the reaction N-succinyl-(2S,6S)-2,6-diaminopimelate + H2O = (2S,6S)-2,6-diaminopimelate + succinate. It participates in amino-acid biosynthesis; L-lysine biosynthesis via DAP pathway; LL-2,6-diaminopimelate from (S)-tetrahydrodipicolinate (succinylase route): step 3/3. In terms of biological role, catalyzes the hydrolysis of N-succinyl-L,L-diaminopimelic acid (SDAP), forming succinate and LL-2,6-diaminopimelate (DAP), an intermediate involved in the bacterial biosynthesis of lysine and meso-diaminopimelic acid, an essential component of bacterial cell walls. The chain is Succinyl-diaminopimelate desuccinylase from Shewanella frigidimarina (strain NCIMB 400).